Reading from the N-terminus, the 84-residue chain is Large ribosomal subunit protein bL27 (84 aa).

The interval 1 to 22 (MAHKKAGGSTRNGRDSESKRLG) is disordered.

It belongs to the bacterial ribosomal protein bL27 family.

This is Large ribosomal subunit protein bL27 from Shewanella oneidensis (strain ATCC 700550 / JCM 31522 / CIP 106686 / LMG 19005 / NCIMB 14063 / MR-1).